A 368-amino-acid polypeptide reads, in one-letter code: tRNA 2-selenouridine synthase (368 aa).

The Rhodanese domain maps to 15–138 (MLSGHPMIDV…MRQYLIEVID (124 aa)). C98 serves as the catalytic S-selanylcysteine intermediate.

The protein belongs to the SelU family. As to quaternary structure, monomer.

The catalysed reaction is 5-methylaminomethyl-2-thiouridine(34) in tRNA + selenophosphate + (2E)-geranyl diphosphate + H2O + H(+) = 5-methylaminomethyl-2-selenouridine(34) in tRNA + (2E)-thiogeraniol + phosphate + diphosphate. The enzyme catalyses 5-methylaminomethyl-2-thiouridine(34) in tRNA + (2E)-geranyl diphosphate = 5-methylaminomethyl-S-(2E)-geranyl-thiouridine(34) in tRNA + diphosphate. It carries out the reaction 5-methylaminomethyl-S-(2E)-geranyl-thiouridine(34) in tRNA + selenophosphate + H(+) = 5-methylaminomethyl-2-(Se-phospho)selenouridine(34) in tRNA + (2E)-thiogeraniol. It catalyses the reaction 5-methylaminomethyl-2-(Se-phospho)selenouridine(34) in tRNA + H2O = 5-methylaminomethyl-2-selenouridine(34) in tRNA + phosphate. Functionally, involved in the post-transcriptional modification of the uridine at the wobble position (U34) of tRNA(Lys), tRNA(Glu) and tRNA(Gln). Catalyzes the conversion of 2-thiouridine (S2U-RNA) to 2-selenouridine (Se2U-RNA). Acts in a two-step process involving geranylation of 2-thiouridine (S2U) to S-geranyl-2-thiouridine (geS2U) and subsequent selenation of the latter derivative to 2-selenouridine (Se2U) in the tRNA chain. The chain is tRNA 2-selenouridine synthase from Shewanella woodyi (strain ATCC 51908 / MS32).